The following is a 139-amino-acid chain: Phosphoribosyl-AMP cyclohydrolase (139 aa).

Residue D95 coordinates Mg(2+). Position 96 (C96) interacts with Zn(2+). Mg(2+) contacts are provided by D97 and D99. Zn(2+) contacts are provided by C114 and C121.

This sequence belongs to the PRA-CH family. As to quaternary structure, homodimer. Requires Mg(2+) as cofactor. Zn(2+) is required as a cofactor.

It localises to the cytoplasm. The catalysed reaction is 1-(5-phospho-beta-D-ribosyl)-5'-AMP + H2O = 1-(5-phospho-beta-D-ribosyl)-5-[(5-phospho-beta-D-ribosylamino)methylideneamino]imidazole-4-carboxamide. It participates in amino-acid biosynthesis; L-histidine biosynthesis; L-histidine from 5-phospho-alpha-D-ribose 1-diphosphate: step 3/9. Catalyzes the hydrolysis of the adenine ring of phosphoribosyl-AMP. In Chelativorans sp. (strain BNC1), this protein is Phosphoribosyl-AMP cyclohydrolase.